We begin with the raw amino-acid sequence, 135 residues long: Small ribosomal subunit protein bS16m (135 aa).

Residues 1–34 constitute a mitochondrion transit peptide; it reads MVQLTTVLCKAYRGGHLTIRLALGGCTNRPFYRI. Thr130 carries the post-translational modification Phosphothreonine.

The protein belongs to the bacterial ribosomal protein bS16 family. As to quaternary structure, component of the mitochondrial ribosome small subunit (28S) which comprises a 12S rRNA and about 30 distinct proteins.

It localises to the mitochondrion. The chain is Small ribosomal subunit protein bS16m (MRPS16) from Bos taurus (Bovine).